The primary structure comprises 291 residues: uncharacterized protein (291 aa).

2 disordered regions span residues 29–50 (SEKP…LRDS) and 168–291 (RKVK…AELK). Ser-50 is modified (phosphoserine). Polar residues-rich tracts occupy residues 176-186 (NSKNPSKTGTP) and 205-217 (QKNS…SKLI). Positions 221–237 (YKDEWLQQQKAEADRRT) are enriched in basic and acidic residues. Residues 280–291 (SSPSESTPAELK) show a composition bias toward polar residues.

This is an uncharacterized protein from Mus musculus (Mouse).